The chain runs to 510 residues: MIWHVQNENFILDSTRIFMKAFHLLLFHGSFIFPECILIFGLILLLMIDLTSDQKDRPWFYFISSTSLVMSITALLFRWKEEPIISFSGNFQTNNFNEIFQFLILLCSTLCIPLSVEYIECTEMAITEFLLFVLTATLGGMFLCGANDFITIFVAPECFSLCSYLLSGYTKRDVRSNEATTKYLLMGGASSSILVHGFSWLYGSSGGEIELQEIVNGLINTQMYNSPGISIALISITVGIGFKLSPAPFHQWTPDVYEGSPTPVVAFLSVTSKVAASASATRIFDIPFYFSSNEWHLLLEILAILSMILGNLIAITQTSMKRMLAYSSIGQIGYVIIGIIVGDSNDGYASMITYMLFYISMNLGTFARIVSFGLRTGTDNIRDYAGLYTKDPFLALSLALCLLSLGGLPPLAGFFGKLHLFWCGWQAGLYFLVSIGLLTSVVSIYYYLKIIKLLMTGRNQEITPHVRNYRRSPLRSNNSIEWSMTVCVIASTIPGISMNPILAIAQDTLF.

Helical transmembrane passes span 24–44 (LLLF…GLIL), 59–79 (WFYF…LFRW), 99–119 (IFQF…VEYI), 124–144 (MAIT…MFLC), 149–169 (FITI…LSGY), 183–203 (YLLM…WLYG), 229–249 (ISIA…PAPF), 295–315 (WHLL…LIAI), 323–343 (MLAY…IVGD), 347–367 (GYAS…GTFA), 395–415 (ALSL…AGFF), and 418–438 (LHLF…IGLL).

The protein belongs to the complex I subunit 2 family. NDH is composed of at least 16 different subunits, 5 of which are encoded in the nucleus.

It is found in the plastid. The protein resides in the chloroplast thylakoid membrane. It catalyses the reaction a plastoquinone + NADH + (n+1) H(+)(in) = a plastoquinol + NAD(+) + n H(+)(out). It carries out the reaction a plastoquinone + NADPH + (n+1) H(+)(in) = a plastoquinol + NADP(+) + n H(+)(out). NDH shuttles electrons from NAD(P)H:plastoquinone, via FMN and iron-sulfur (Fe-S) centers, to quinones in the photosynthetic chain and possibly in a chloroplast respiratory chain. The immediate electron acceptor for the enzyme in this species is believed to be plastoquinone. Couples the redox reaction to proton translocation, and thus conserves the redox energy in a proton gradient. This Phormium tenax (New Zealand flax) protein is NAD(P)H-quinone oxidoreductase subunit 2, chloroplastic.